Here is a 247-residue protein sequence, read N- to C-terminus: Phosphate import ATP-binding protein PstB (247 aa).

An ABC transporter domain is found at 2-242; sequence CRDVNVYYGE…PRHPLTEDYI (241 aa). 32-39 is a binding site for ATP; it reads GPSGCGKS.

This sequence belongs to the ABC transporter superfamily. Phosphate importer (TC 3.A.1.7) family. As to quaternary structure, the complex is composed of two ATP-binding proteins (PstB), two transmembrane proteins (PstC and PstA) and a solute-binding protein (PstS).

It localises to the cell inner membrane. It catalyses the reaction phosphate(out) + ATP + H2O = ADP + 2 phosphate(in) + H(+). Part of the ABC transporter complex PstSACB involved in phosphate import. Responsible for energy coupling to the transport system. This is Phosphate import ATP-binding protein PstB from Methylococcus capsulatus (strain ATCC 33009 / NCIMB 11132 / Bath).